The following is a 129-amino-acid chain: Small ribosomal subunit protein uS11 (129 aa).

Belongs to the universal ribosomal protein uS11 family. In terms of assembly, part of the 30S ribosomal subunit. Interacts with proteins S7 and S18. Binds to IF-3.

Located on the platform of the 30S subunit, it bridges several disparate RNA helices of the 16S rRNA. Forms part of the Shine-Dalgarno cleft in the 70S ribosome. This chain is Small ribosomal subunit protein uS11, found in Idiomarina loihiensis (strain ATCC BAA-735 / DSM 15497 / L2-TR).